The chain runs to 287 residues: ATP synthase gamma chain (287 aa).

It belongs to the ATPase gamma chain family. In terms of assembly, F-type ATPases have 2 components, CF(1) - the catalytic core - and CF(0) - the membrane proton channel. CF(1) has five subunits: alpha(3), beta(3), gamma(1), delta(1), epsilon(1). CF(0) has three main subunits: a, b and c.

The protein localises to the cell inner membrane. Its function is as follows. Produces ATP from ADP in the presence of a proton gradient across the membrane. The gamma chain is believed to be important in regulating ATPase activity and the flow of protons through the CF(0) complex. The sequence is that of ATP synthase gamma chain from Methylococcus capsulatus (strain ATCC 33009 / NCIMB 11132 / Bath).